We begin with the raw amino-acid sequence, 687 residues long: TWiK family of potassium channels protein 12 (687 aa).

Over 1–21 the chain is Cytoplasmic; it reads MTLFQKLQWFCQLIRLRAYYK. Residues 22 to 42 form a helical membrane-spanning segment; sequence FLLLIAYTLFGAWLFRFYELQ. Residues Asn-53, Asn-77, and Asn-98 are each glycosylated (N-linked (GlcNAc...) asparagine). Positions 112–132 form an intramembrane region, pore-forming; it reads WTWTGAMFYAGQLYTTIGYGY. A helical membrane pass occupies residues 142–162; the sequence is ICTVLYALFGIPCFLMYLKAI. At 163–212 the chain is on the cytoplasmic side; sequence GKTLSKRLKKIYKRVRRSAFGKFLLPTRVTATKDGFEDPDASAEERKRKP. Residues 213-233 traverse the membrane as a helical segment; that stretch reads FPIPIAIILLIIWICFSASMF. Positions 242–262 form an intramembrane region, pore-forming; sequence FPSAVYFFIVSISTVGLGDML. Residues 270–290 traverse the membrane as a helical segment; the sequence is VFNFLLILFGLALLSMCFELI. The Cytoplasmic segment spans residues 291-687; sequence TDRIAKWKQK…SKRDAPVNIV (397 aa). The interval 661–687 is disordered; sequence SPSTSTSTSMIDSGYDLSKRDAPVNIV. Residues 677–687 are compositionally biased toward basic and acidic residues; it reads LSKRDAPVNIV.

The protein belongs to the two pore domain potassium channel (TC 1.A.1.8) family.

Its subcellular location is the membrane. The sequence is that of TWiK family of potassium channels protein 12 from Caenorhabditis briggsae.